The following is a 444-amino-acid chain: Probable glycine dehydrogenase (decarboxylating) subunit 1 (444 aa).

It belongs to the GcvP family. N-terminal subunit subfamily. As to quaternary structure, the glycine cleavage system is composed of four proteins: P, T, L and H. In this organism, the P 'protein' is a heterodimer of two subunits.

It catalyses the reaction N(6)-[(R)-lipoyl]-L-lysyl-[glycine-cleavage complex H protein] + glycine + H(+) = N(6)-[(R)-S(8)-aminomethyldihydrolipoyl]-L-lysyl-[glycine-cleavage complex H protein] + CO2. The glycine cleavage system catalyzes the degradation of glycine. The P protein binds the alpha-amino group of glycine through its pyridoxal phosphate cofactor; CO(2) is released and the remaining methylamine moiety is then transferred to the lipoamide cofactor of the H protein. This chain is Probable glycine dehydrogenase (decarboxylating) subunit 1, found in Chlorobium phaeobacteroides (strain DSM 266 / SMG 266 / 2430).